The following is a 152-amino-acid chain: Xanthine-guanine phosphoribosyltransferase (152 aa).

5-phospho-alpha-D-ribose 1-diphosphate is bound by residues 37 to 38 (RG), arginine 69, and 88 to 96 (DDLVDTGGT). Arginine 69 is a binding site for GMP. Aspartate 89 provides a ligand contact to Mg(2+). Positions 92 and 135 each coordinate guanine. Positions 92 and 135 each coordinate xanthine. GMP contacts are provided by residues 92 to 96 (DTGGT) and 134 to 135 (WI).

The protein belongs to the purine/pyrimidine phosphoribosyltransferase family. XGPT subfamily. As to quaternary structure, homotetramer. Requires Mg(2+) as cofactor.

Its subcellular location is the cell inner membrane. The catalysed reaction is GMP + diphosphate = guanine + 5-phospho-alpha-D-ribose 1-diphosphate. It carries out the reaction XMP + diphosphate = xanthine + 5-phospho-alpha-D-ribose 1-diphosphate. It catalyses the reaction IMP + diphosphate = hypoxanthine + 5-phospho-alpha-D-ribose 1-diphosphate. It functions in the pathway purine metabolism; GMP biosynthesis via salvage pathway; GMP from guanine: step 1/1. It participates in purine metabolism; XMP biosynthesis via salvage pathway; XMP from xanthine: step 1/1. Purine salvage pathway enzyme that catalyzes the transfer of the ribosyl-5-phosphate group from 5-phospho-alpha-D-ribose 1-diphosphate (PRPP) to the N9 position of the 6-oxopurines guanine and xanthine to form the corresponding ribonucleotides GMP (guanosine 5'-monophosphate) and XMP (xanthosine 5'-monophosphate), with the release of PPi. To a lesser extent, also acts on hypoxanthine. The polypeptide is Xanthine-guanine phosphoribosyltransferase (Photobacterium profundum (strain SS9)).